Reading from the N-terminus, the 351-residue chain is Biotin synthase (351 aa).

In terms of domain architecture, Radical SAM core spans 73-298; it reads PEVEVEGIIS…RTILRYSGGR (226 aa). Positions 88, 92, and 95 each coordinate [4Fe-4S] cluster. [2Fe-2S] cluster-binding residues include Cys-131, Cys-164, Cys-223, and Arg-293.

Belongs to the radical SAM superfamily. Biotin synthase family. As to quaternary structure, homodimer. Requires [4Fe-4S] cluster as cofactor. [2Fe-2S] cluster serves as cofactor.

The enzyme catalyses (4R,5S)-dethiobiotin + (sulfur carrier)-SH + 2 reduced [2Fe-2S]-[ferredoxin] + 2 S-adenosyl-L-methionine = (sulfur carrier)-H + biotin + 2 5'-deoxyadenosine + 2 L-methionine + 2 oxidized [2Fe-2S]-[ferredoxin]. The protein operates within cofactor biosynthesis; biotin biosynthesis; biotin from 7,8-diaminononanoate: step 2/2. In terms of biological role, catalyzes the conversion of dethiobiotin (DTB) to biotin by the insertion of a sulfur atom into dethiobiotin via a radical-based mechanism. This Frankia alni (strain DSM 45986 / CECT 9034 / ACN14a) protein is Biotin synthase.